The chain runs to 352 residues: C-X-C chemokine receptor type 4 (352 aa).

Positions 1 to 21 (MEGISIYTSDNYTEEMGSGDY) are important for chemokine binding and signaling. At 1-38 (MEGISIYTSDNYTEEMGSGDYDSMKEPCFREENANFNK) the chain is on the extracellular side. The residue at position 7 (tyrosine 7) is a Sulfotyrosine. Asparagine 11 carries N-linked (GlcNAc...) asparagine glycosylation. Residue tyrosine 12 is modified to Sulfotyrosine. Serine 18 carries an O-linked (Xyl...) (chondroitin sulfate) serine glycan. Residue tyrosine 21 is modified to Sulfotyrosine. 2 disulfide bridges follow: cysteine 28–cysteine 274 and cysteine 109–cysteine 186. Residues 39-63 (IFLPTIYSIIFLTGIVGNGLVILVM) traverse the membrane as a helical segment. Residues 64-77 (GYQKKLRSMTDKYR) lie on the Cytoplasmic side of the membrane. Residues 78–99 (LHLSVADLLFVITLPFWAVDAV) form a helical membrane-spanning segment. The segment at 94 to 97 (WAVD) is chemokine binding. Residues 100–110 (ANWYFGNFLCK) are Extracellular-facing. A helical membrane pass occupies residues 111–130 (AVHVIYTVNLYSSVLILAFI). The interval 113–117 (HVIYT) is chemokine binding. Topologically, residues 131–154 (SLDRYLAIVHATNSQRPRKLLAEK) are cytoplasmic. The short motif at 133-135 (DRY) is the Important for signaling element. Residues 135 to 147 (YLAIVHATNSQRP) are involved in dimerization; when bound to chemokine. The chain crosses the membrane as a helical span at residues 155–174 (VVYVGVWIPALLLTIPDFIF). Residues 175-195 (ANVSEADDRYICDRFYPNDLW) are Extracellular-facing. Positions 186–190 (CDRFY) are chemokine binding, important for signaling. Residues 191–210 (PNDLWVVVFQFQHIMVGLIL) are involved in dimerization. The chain crosses the membrane as a helical span at residues 196–216 (VVVFQFQHIMVGLILPGIVIL). At 217 to 241 (SCYCIIISKLSHSKGHQKRKALKTT) the chain is on the cytoplasmic side. A helical transmembrane segment spans residues 242–261 (VILILAFFACWLPYYIGISI). The Extracellular portion of the chain corresponds to 262–282 (DSFILLEIIKQGCEFENTVHK). Positions 266–268 (LLE) are involved in dimerization. Residues 283-302 (WISITEALAFFHCCLNPILY) form a helical membrane-spanning segment. Residues 303–352 (AFLGAKFKTSAQHALTSVSRGSSLKILSKGKRGGHSSVSTESESSSFHSS) lie on the Cytoplasmic side of the membrane. 2 positions are modified to phosphoserine: serine 319 and serine 321. A phosphoserine; by PKC and GRK6 mark is found at serine 324 and serine 325. A disordered region spans residues 329–352 (LSKGKRGGHSSVSTESESSSFHSS). Phosphoserine; by GRK6 is present on serine 330. Lysine 331 is covalently cross-linked (Glycyl lysine isopeptide (Lys-Gly) (interchain with G-Cter in ubiquitin)). Positions 337-352 (HSSVSTESESSSFHSS) are enriched in low complexity. Serine 339 is subject to Phosphoserine; by GRK6. Residues serine 348 and serine 351 each carry the phosphoserine modification.

It belongs to the G-protein coupled receptor 1 family. In terms of assembly, monomer. Can form homodimers. Interacts with CD164. Interacts with ARRB2; the interaction is dependent on the C-terminal phosphorylation of CXCR4 and allows activation of MAPK1 and MAPK3. Interacts with ARR3; the interaction is dependent on the C-terminal phosphorylation of CXCR4 and modulates calcium mobilization. Interacts with RNF113A; the interaction, enhanced by CXCL12, promotes CXCR4 ubiquitination and subsequent degradation. Interacts (via the cytoplasmic C-terminal) with ITCH (via the WW domains I and II); the interaction, enhanced by CXCL12, promotes CXCR4 ubiquitination and leads to its degradation. Interacts with extracellular ubiquitin. Interacts with DBN1; this interaction is enhanced by antigenic stimulation. Following LPS binding, may form a complex with GDF5, HSP90AA1 and HSPA8. Phosphorylated on agonist stimulation. Rapidly phosphorylated on serine and threonine residues in the C-terminal. Phosphorylation at Ser-324 and Ser-325 leads to recruitment of ITCH, ubiquitination and protein degradation. Post-translationally, ubiquitinated after ligand binding, leading to its degradation. Ubiquitinated by ITCH at the cell membrane on agonist stimulation. The ubiquitin-dependent mechanism, endosomal sorting complex required for transport (ESCRT), then targets CXCR4 for lysosomal degradation. This process is dependent also on prior Ser-/Thr-phosphorylation in the C-terminal of CXCR4. Also binding of ARRB1 to STAM negatively regulates CXCR4 sorting to lysosomes though modulating ubiquitination of SFR5S. In terms of processing, sulfation is required for efficient binding of CXCL12/SDF-1alpha and promotes its dimerization. O- and N-glycosylated. N-glycosylation can mask coreceptor function. The O-glycosylation chondroitin sulfate attachment does not affect interaction with CXCL12/SDF-1alpha nor its coreceptor activity.

It is found in the cell membrane. The protein localises to the cell junction. Its subcellular location is the early endosome. The protein resides in the late endosome. It localises to the lysosome. Receptor for the C-X-C chemokine CXCL12/SDF-1 that transduces a signal by increasing intracellular calcium ion levels and enhancing MAPK1/MAPK3 activation. Involved in the AKT signaling cascade. Plays a role in regulation of cell migration, e.g. during wound healing. Acts as a receptor for extracellular ubiquitin; leading to enhanced intracellular calcium ions and reduced cellular cAMP levels. Binds bacterial lipopolysaccharide (LPS) et mediates LPS-induced inflammatory response, including TNF secretion by monocytes. Involved in hematopoiesis and in cardiac ventricular septum formation. Also plays an essential role in vascularization of the gastrointestinal tract, probably by regulating vascular branching and/or remodeling processes in endothelial cells. Involved in cerebellar development. In the CNS, could mediate hippocampal-neuron survival. In Pan troglodytes (Chimpanzee), this protein is C-X-C chemokine receptor type 4 (CXCR4).